The primary structure comprises 307 residues: Acetyl-coenzyme A carboxylase carboxyl transferase subunit beta (307 aa).

A disordered region spans residues 1–21; it reads MAMADQRNDKPGRPAAQRERR. A CoA carboxyltransferase N-terminal domain is found at 43–307; sequence LWVKCPETGE…MGRERLSPAA (265 aa).

The protein belongs to the AccD/PCCB family. In terms of assembly, acetyl-CoA carboxylase is a heterohexamer composed of biotin carboxyl carrier protein (AccB), biotin carboxylase (AccC) and two subunits each of ACCase subunit alpha (AccA) and ACCase subunit beta (AccD).

The protein localises to the cytoplasm. The catalysed reaction is N(6)-carboxybiotinyl-L-lysyl-[protein] + acetyl-CoA = N(6)-biotinyl-L-lysyl-[protein] + malonyl-CoA. Its pathway is lipid metabolism; malonyl-CoA biosynthesis; malonyl-CoA from acetyl-CoA: step 1/1. Component of the acetyl coenzyme A carboxylase (ACC) complex. Biotin carboxylase (BC) catalyzes the carboxylation of biotin on its carrier protein (BCCP) and then the CO(2) group is transferred by the transcarboxylase to acetyl-CoA to form malonyl-CoA. This chain is Acetyl-coenzyme A carboxylase carboxyl transferase subunit beta, found in Phenylobacterium zucineum (strain HLK1).